Here is a 372-residue protein sequence, read N- to C-terminus: 4-hydroxy-3-methylbut-2-en-1-yl diphosphate synthase (flavodoxin) (372 aa).

Positions 270, 273, 305, and 312 each coordinate [4Fe-4S] cluster.

It belongs to the IspG family. Requires [4Fe-4S] cluster as cofactor.

The enzyme catalyses (2E)-4-hydroxy-3-methylbut-2-enyl diphosphate + oxidized [flavodoxin] + H2O + 2 H(+) = 2-C-methyl-D-erythritol 2,4-cyclic diphosphate + reduced [flavodoxin]. It functions in the pathway isoprenoid biosynthesis; isopentenyl diphosphate biosynthesis via DXP pathway; isopentenyl diphosphate from 1-deoxy-D-xylulose 5-phosphate: step 5/6. Its function is as follows. Converts 2C-methyl-D-erythritol 2,4-cyclodiphosphate (ME-2,4cPP) into 1-hydroxy-2-methyl-2-(E)-butenyl 4-diphosphate. This is 4-hydroxy-3-methylbut-2-en-1-yl diphosphate synthase (flavodoxin) from Vibrio campbellii (strain ATCC BAA-1116).